We begin with the raw amino-acid sequence, 186 residues long: Adenylate kinase (186 aa).

ATP is bound at residue Gly-12–Thr-17. The NMP stretch occupies residues Ser-32–Val-61. AMP is bound by residues Thr-33, Arg-38, Glu-59–Val-61, Gly-86–Arg-89, and Gln-93. The tract at residues Ser-127–Asp-133 is LID. Residue Arg-128 participates in ATP binding. 2 residues coordinate AMP: Arg-130 and Arg-141. Gly-169 is an ATP binding site.

The protein belongs to the adenylate kinase family. In terms of assembly, monomer.

It is found in the cytoplasm. The catalysed reaction is AMP + ATP = 2 ADP. The protein operates within purine metabolism; AMP biosynthesis via salvage pathway; AMP from ADP: step 1/1. Its function is as follows. Catalyzes the reversible transfer of the terminal phosphate group between ATP and AMP. Plays an important role in cellular energy homeostasis and in adenine nucleotide metabolism. The protein is Adenylate kinase of Prochlorococcus marinus (strain MIT 9211).